Consider the following 265-residue polypeptide: MNKLQEEWNRFCASWMFNTRLPILPFYVYSESTLSRSSRYFPLIGWIVSAGTSYSTYFLSWILPIEISIILGMILSVLITGGFHEDGLADVCDAFGGGWSKEKILEIMKDSRIGTFGSIGLILSLGLKYLLLVNLFKISPWIFLFTSWFSHSASRWFALLLMMLIPYARENDLSKSKPMIKKLPPFDFALSTFFGCFPAVYFLYQFQNQIPNVLLGFFLSSIFVFYFRNYFNKWIEGFTGDCLGFIQQGTELLFYLGITVSWNSI.

Transmembrane regions (helical) follow at residues 59–79 (LSWI…SVLI), 113–133 (IGTF…LLLV), 141–161 (WIFL…ALLL), 183–203 (LPPF…VYFL), and 206–226 (FQNQ…FVFY).

Belongs to the CobS family. Requires Mg(2+) as cofactor.

It localises to the cell inner membrane. It carries out the reaction alpha-ribazole + adenosylcob(III)inamide-GDP = adenosylcob(III)alamin + GMP + H(+). The enzyme catalyses alpha-ribazole 5'-phosphate + adenosylcob(III)inamide-GDP = adenosylcob(III)alamin 5'-phosphate + GMP + H(+). It functions in the pathway cofactor biosynthesis; adenosylcobalamin biosynthesis; adenosylcobalamin from cob(II)yrinate a,c-diamide: step 7/7. Functionally, joins adenosylcobinamide-GDP and alpha-ribazole to generate adenosylcobalamin (Ado-cobalamin). Also synthesizes adenosylcobalamin 5'-phosphate from adenosylcobinamide-GDP and alpha-ribazole 5'-phosphate. The polypeptide is Adenosylcobinamide-GDP ribazoletransferase (Leptospira interrogans serogroup Icterohaemorrhagiae serovar copenhageni (strain Fiocruz L1-130)).